Reading from the N-terminus, the 444-residue chain is DNA primase DnaG (444 aa).

The 78-residue stretch at 173–250 (DAILIVEGRS…YVTRAPRGLE (78 aa)) folds into the Toprim domain. E179, D221, and D223 together coordinate Mg(2+). The segment at 302–354 (VTSSVNKTDKYSQKNESKQFKQQKNENKQVKDNSKEKTQKSTEKHNETEETHL) is disordered. Residues 308 to 354 (KTDKYSQKNESKQFKQQKNENKQVKDNSKEKTQKSTEKHNETEETHL) are compositionally biased toward basic and acidic residues.

The protein belongs to the archaeal DnaG primase family. As to quaternary structure, forms a ternary complex with MCM helicase and DNA. Component of the archaeal exosome complex. Mg(2+) is required as a cofactor.

The enzyme catalyses ssDNA + n NTP = ssDNA/pppN(pN)n-1 hybrid + (n-1) diphosphate.. Its function is as follows. RNA polymerase that catalyzes the synthesis of short RNA molecules used as primers for DNA polymerase during DNA replication. Also part of the exosome, which is a complex involved in RNA degradation. Acts as a poly(A)-binding protein that enhances the interaction between heteromeric, adenine-rich transcripts and the exosome. The chain is DNA primase DnaG from Methanosphaera stadtmanae (strain ATCC 43021 / DSM 3091 / JCM 11832 / MCB-3).